The primary structure comprises 131 residues: D-ribose pyranase (131 aa).

His20 acts as the Proton donor in catalysis. Substrate-binding positions include Asp28, His98, and 120–122; that span reads YSN.

It belongs to the RbsD / FucU family. RbsD subfamily. In terms of assembly, homodecamer.

It localises to the cytoplasm. It carries out the reaction beta-D-ribopyranose = beta-D-ribofuranose. The protein operates within carbohydrate metabolism; D-ribose degradation; D-ribose 5-phosphate from beta-D-ribopyranose: step 1/2. Its function is as follows. Catalyzes the interconversion of beta-pyran and beta-furan forms of D-ribose. The protein is D-ribose pyranase of Lactiplantibacillus plantarum (strain ATCC BAA-793 / NCIMB 8826 / WCFS1) (Lactobacillus plantarum).